The primary structure comprises 149 residues: MFSPQSRLRHAVADTFAMVVYCSVVNMLIEIFLSGMTFEQSLSSRLVAIPVNILIAWPYGMYRDAIMRVARKASPASWVKNLADVLAYVTFQSPVYVAILLTVGADWHQITAAVSSNIVISMLMGAVYGYFLDYCRRLFKVSSYHQAKA.

4 helical membrane-spanning segments follow: residues 16-36 (FAMV…LSGM), 46-66 (LVAI…RDAI), 85-105 (VLAY…TVGA), and 112-132 (AAVS…GYFL).

The protein belongs to the AlaE exporter family.

It localises to the cell inner membrane. Exports L-alanine. This chain is L-alanine exporter AlaE, found in Citrobacter koseri (strain ATCC BAA-895 / CDC 4225-83 / SGSC4696).